A 93-amino-acid polypeptide reads, in one-letter code: Microcin N immunity protein (93 aa).

3 consecutive transmembrane segments (helical) span residues 3–23, 36–56, and 68–88; these read FLNF…FIVW, LSII…NYKI, and LFCF…YFIL.

Belongs to the MceB microcin immunity protein family.

The protein localises to the cell inner membrane. In terms of biological role, probably able to protect the producing cell against microcin N (microcin 24). The polypeptide is Microcin N immunity protein (Escherichia coli).